The sequence spans 206 residues: Urease accessory protein UreG (206 aa).

15–22 (GPVGSGKT) is a GTP binding site.

Belongs to the SIMIBI class G3E GTPase family. UreG subfamily. Homodimer. UreD, UreF and UreG form a complex that acts as a GTP-hydrolysis-dependent molecular chaperone, activating the urease apoprotein by helping to assemble the nickel containing metallocenter of UreC. The UreE protein probably delivers the nickel.

The protein localises to the cytoplasm. In terms of biological role, facilitates the functional incorporation of the urease nickel metallocenter. This process requires GTP hydrolysis, probably effectuated by UreG. This Ralstonia pickettii (strain 12J) protein is Urease accessory protein UreG.